Consider the following 177-residue polypeptide: MESATTDIRDSIGSIPDYPKPGIIFRDITPLLQNPDAFRLTINTLKQRYAGQGITQIAAVEARGFIFGSALAYAMGCGVTLLRKPGKLPGKVTRQNYELEYGSDELQMHENALTENDRVLIVDDLLATGGTVVAASQLIKSSGADVVEAAFVVSLPELGGEDKLQQAGVACYTLCQF.

Belongs to the purine/pyrimidine phosphoribosyltransferase family. As to quaternary structure, homodimer.

The protein resides in the cytoplasm. The enzyme catalyses AMP + diphosphate = 5-phospho-alpha-D-ribose 1-diphosphate + adenine. It functions in the pathway purine metabolism; AMP biosynthesis via salvage pathway; AMP from adenine: step 1/1. Functionally, catalyzes a salvage reaction resulting in the formation of AMP, that is energically less costly than de novo synthesis. This Idiomarina loihiensis (strain ATCC BAA-735 / DSM 15497 / L2-TR) protein is Adenine phosphoribosyltransferase.